Consider the following 252-residue polypeptide: Flap endonuclease Xni (252 aa).

Position 105 (Asp-105) interacts with Mg(2+). The region spanning 162–250 is the 5'-3' exonuclease domain; sequence ERTQFIDYLA…LNANLSQFRL (89 aa). 5 residues coordinate K(+): Leu-172, Ala-173, Pro-181, Val-183, and Ile-186. Residues 185-190 are interaction with DNA; sequence GIGPKS.

Belongs to the Xni family. Requires Mg(2+) as cofactor. It depends on K(+) as a cofactor.

Functionally, has flap endonuclease activity. During DNA replication, flap endonucleases cleave the 5'-overhanging flap structure that is generated by displacement synthesis when DNA polymerase encounters the 5'-end of a downstream Okazaki fragment. The chain is Flap endonuclease Xni from Shewanella woodyi (strain ATCC 51908 / MS32).